Here is a 153-residue protein sequence, read N- to C-terminus: Ribosome maturation factor RimP (153 aa).

This sequence belongs to the RimP family.

Its subcellular location is the cytoplasm. Required for maturation of 30S ribosomal subunits. This is Ribosome maturation factor RimP from Psychromonas ingrahamii (strain DSM 17664 / CCUG 51855 / 37).